We begin with the raw amino-acid sequence, 806 residues long: Leucine--tRNA ligase (806 aa).

The short motif at 40 to 51 is the 'HIGH' region element; sequence PYPSGKGLHVGH. Positions 580–584 match the 'KMSKS' region motif; that stretch reads KMSKS. Lys-583 contributes to the ATP binding site.

This sequence belongs to the class-I aminoacyl-tRNA synthetase family.

The protein localises to the cytoplasm. The enzyme catalyses tRNA(Leu) + L-leucine + ATP = L-leucyl-tRNA(Leu) + AMP + diphosphate. The protein is Leucine--tRNA ligase of Ureaplasma urealyticum serovar 10 (strain ATCC 33699 / Western).